Here is a 439-residue protein sequence, read N- to C-terminus: Glutamate--tRNA ligase 2 (439 aa).

Positions 6 to 16 match the 'HIGH' region motif; sequence PSPTGDMHIGN. The short motif at 232–236 is the 'KMSKS' region element; it reads KMSKR. Lysine 235 is a binding site for ATP.

This sequence belongs to the class-I aminoacyl-tRNA synthetase family. Glutamate--tRNA ligase type 1 subfamily. In terms of assembly, monomer.

It localises to the cytoplasm. The enzyme catalyses tRNA(Glu) + L-glutamate + ATP = L-glutamyl-tRNA(Glu) + AMP + diphosphate. Catalyzes the attachment of glutamate to tRNA(Glu) in a two-step reaction: glutamate is first activated by ATP to form Glu-AMP and then transferred to the acceptor end of tRNA(Glu). The protein is Glutamate--tRNA ligase 2 of Helicobacter pylori (strain P12).